The primary structure comprises 71 residues: UPF0346 protein str0441 (71 aa).

Belongs to the UPF0346 family.

The sequence is that of UPF0346 protein str0441 from Streptococcus thermophilus (strain CNRZ 1066).